We begin with the raw amino-acid sequence, 307 residues long: Retron Ec86 putative ribosyltransferase/DNA-binding protein (307 aa).

Functionally, possible ribosyltransferase/DNA-binding component of antiviral defense system retron Ec86, composed of a non-coding RNA (ncRNA), a ribosyltransferase/DNA-binding protein and a reverse transcriptase (RT). Expression of the 3-gene retron confers protection against bacteriophages T5. At multiplicity of infection (MOI) of 0.02 cultures grow normally when infected with T5 without collapsing, at MOI 2 cultures enter growth stasis. This chain is Retron Ec86 putative ribosyltransferase/DNA-binding protein, found in Escherichia coli.